The following is a 198-amino-acid chain: RNA pyrophosphohydrolase (198 aa).

Residues 6–149 (GYRPNVGIVI…KKEVYRKAMK (144 aa)) enclose the Nudix hydrolase domain. Positions 38-59 (GGINDNESAEQAMYRELFEEVG) match the Nudix box motif.

It belongs to the Nudix hydrolase family. RppH subfamily. A divalent metal cation is required as a cofactor.

In terms of biological role, accelerates the degradation of transcripts by removing pyrophosphate from the 5'-end of triphosphorylated RNA, leading to a more labile monophosphorylated state that can stimulate subsequent ribonuclease cleavage. This chain is RNA pyrophosphohydrolase, found in Pasteurella multocida (strain Pm70).